We begin with the raw amino-acid sequence, 503 residues long: Diels-Alderase cghA (503 aa).

Belongs to the Diels-Alderase family.

It carries out the reaction (2S)-3-[(2S)-3,5-dioxo-4-[(2E,4R,6R,8E,10E,12E)-4,6,12-trimethyltetradeca-2,8,10,12-tetraenoyl]pyrrolidin-2-yl]-2-hydroxy-2-methylpropanoate = sch 210972. Its pathway is secondary metabolite biosynthesis. In terms of biological role, diels-Alderase; part of the gene cluster that mediates the biosynthesis of the tetramic acid Sch210972, a potential anti-HIV fungal natural product that contains a decalin core. The PKS module of cghG together with the enoylreductase cghC catalyze the formation of the polyketide unit which is then conjugated to 4-hydroxyl-4-methyl glutamate (HMG) by the condensation domain of the cghG NRPS module. One unique structural feature of Sch210972 is the tetramic acid motif proposed to be derived from the non-proteinogenic amino acid HMG, by a Dieckmann-type condensation catalyzed by the reductase domain of cghG. The aldolase cghB catalyzes the aldol condensation of 2 molecules of pyruvic acid to yield the intermediate 4-hydroxyl-4-methyl-2-oxoglutarate (HMOG), which can then be stereoselectively transaminated by an unidentified enzyme to form HMG. The Diels-Alderase cghA then uses the Dieckmann product released by cghG as substrate and catalyzes the Diels-Alder cycloaddition to form the decalin ring of Sch210972. CghA also suppresses the nonenzymatic formation of the alternative stereoisomer. This is Diels-Alderase cghA from Chaetomium globosum (strain ATCC 6205 / CBS 148.51 / DSM 1962 / NBRC 6347 / NRRL 1970) (Soil fungus).